The chain runs to 88 residues: Protein MATERNALLY EXPRESSED GENE 2 (88 aa).

The first 27 residues, 1–27, serve as a signal peptide directing secretion; that stretch reads MEYRKRVDALVFFSLLLLGYFAAHAHG. Residues Cys65 and Cys87 are joined by a disulfide bond.

Belongs to the MEG family. As to expression, expressed exclusively in endosperm.

This is Protein MATERNALLY EXPRESSED GENE 2 (MEG2) from Zea mays (Maize).